The chain runs to 297 residues: Acetaldehyde dehydrogenase (297 aa).

15–18 is an NAD(+) binding site; it reads SGSI. Cysteine 130 (acyl-thioester intermediate) is an active-site residue. NAD(+) contacts are provided by residues 162 to 170 and asparagine 272; that span reads SAGIATREN.

This sequence belongs to the acetaldehyde dehydrogenase family.

The enzyme catalyses acetaldehyde + NAD(+) + CoA = acetyl-CoA + NADH + H(+). This is Acetaldehyde dehydrogenase from Burkholderia pseudomallei (strain 1106a).